The following is a 1733-amino-acid chain: Serine-aspartate repeat-containing protein F (1733 aa).

The N-terminal stretch at Met-1–Ala-45 is a signal peptide. The tract at residues Ala-46–Pro-678 is ligand binding A region. Disordered regions lie at residues Lys-51 to Asp-269 and Pro-332 to Arg-351. Residues Ala-61–Asn-74 show a composition bias toward basic and acidic residues. 2 stretches are compositionally biased toward polar residues: residues Gly-85–Thr-99 and Pro-146–Asn-168. The span at Lys-175 to Thr-184 shows a compositional bias: basic and acidic residues. Residues Gln-186–Gln-226 show a composition bias toward polar residues. The segment covering Leu-227–Thr-253 has biased composition (basic and acidic residues). Polar residues-rich tracts occupy residues Lys-255 to Ser-266 and Asn-336 to Lys-346. CNA-B domains lie at Thr-679 to Pro-797, Lys-798 to Pro-907, Thr-908 to Pro-1018, and Lys-1019 to Asp-1129. Residues Thr-679–Asp-1129 are type I collagen binding region. The segment at Phe-862–Val-890 is disordered. A disordered region spans residues Lys-1085–Thr-1708. Basic and acidic residues predominate over residues Glu-1107–Phe-1119. Residues Tyr-1125–Ser-1684 show a composition bias toward acidic residues. Residues Asp-1685–Lys-1706 show a composition bias toward basic and acidic residues. The LPXTG sorting signal motif lies at Leu-1694–Gly-1698. Thr-1697 is subject to Pentaglycyl murein peptidoglycan amidated threonine. A propeptide spans Gly-1698–Lys-1733 (removed by sortase).

This sequence belongs to the serine-aspartate repeat-containing protein (SDr) family.

It localises to the secreted. The protein resides in the cell wall. Its function is as follows. Binds to type I collagen via alpha-2(I) or alpha-1(I) chains, although its affinity for the alpha-1(I) chain is significantly higher. Involved in bacterial adherence to transcutaneous drivelines from explanted ventricular assist devices. This Staphylococcus epidermidis protein is Serine-aspartate repeat-containing protein F (sdrF).